Reading from the N-terminus, the 422-residue chain is Probable isoprenylcysteine alpha-carbonyl methylesterase ICMEL2 (422 aa).

A compositionally biased stretch (basic and acidic residues) spans 1 to 16 (MQLSPERCRPMSENRE). Residues 1 to 55 (MQLSPERCRPMSENREAWSANSEEMELLHGSNRLSSPEHVRRRVSGNSSEDGSPR) are disordered. Transmembrane regions (helical) follow at residues 97–117 (LLALACYAMLLMPGFLQVAYL) and 152–172 (VVVFVTGGAWIIGYKAWGSLL). Substrate contacts are provided by residues 158 to 160 (GGA) and 229 to 231 (QSA). Active-site residues include S230, D331, and H363.

It belongs to the AB hydrolase superfamily. Isoprenylcysteine methylesterase family. Expressed at low levels in flowers and siliques.

The protein localises to the endoplasmic reticulum membrane. Its subcellular location is the golgi apparatus membrane. The enzyme catalyses [protein]-C-terminal S-[(2E,6E)-farnesyl]-L-cysteine methyl ester + H2O = [protein]-C-terminal S-[(2E,6E)-farnesyl]-L-cysteine + methanol + H(+). Functionally, catalyzes the demethylation of isoprenylcysteine methylesters. May act as a negative regulator of ABA signaling. The protein is Probable isoprenylcysteine alpha-carbonyl methylesterase ICMEL2 of Arabidopsis thaliana (Mouse-ear cress).